Reading from the N-terminus, the 500-residue chain is Cytochrome P450 71B38 (500 aa).

The chain crosses the membrane as a helical span at residues 3 to 23 (IFLCFLLLLPLSLILFKKLLP). Cys441 is a binding site for heme.

Belongs to the cytochrome P450 family. Heme serves as cofactor.

Its subcellular location is the membrane. This chain is Cytochrome P450 71B38 (CYP71B38), found in Arabidopsis thaliana (Mouse-ear cress).